The sequence spans 1513 residues: DNA-directed RNA polymerase subunit beta'' (1513 aa).

Positions 220, 296, 303, and 306 each coordinate Zn(2+). Residues 644-769 (RTREKDSENE…EYGNPEEDSV (126 aa)) are disordered. Residues 659–679 (NEYRTREEECKTLEDEYRTRE) are compositionally biased toward basic and acidic residues. Acidic residues predominate over residues 680–707 (EEYETLEDEYGIPENEYETLEDEYGILE). The span at 726 to 737 (NKYRPREDKYGT) shows a compositional bias: basic and acidic residues. A compositionally biased stretch (acidic residues) spans 738-767 (LEEDSEDEHGTLEEDSEEDSEDEYGNPEED).

The protein belongs to the RNA polymerase beta' chain family. RpoC2 subfamily. In terms of assembly, in plastids the minimal PEP RNA polymerase catalytic core is composed of four subunits: alpha, beta, beta', and beta''. When a (nuclear-encoded) sigma factor is associated with the core the holoenzyme is formed, which can initiate transcription. Zn(2+) is required as a cofactor.

Its subcellular location is the plastid. The protein resides in the chloroplast. The enzyme catalyses RNA(n) + a ribonucleoside 5'-triphosphate = RNA(n+1) + diphosphate. DNA-dependent RNA polymerase catalyzes the transcription of DNA into RNA using the four ribonucleoside triphosphates as substrates. This is DNA-directed RNA polymerase subunit beta'' from Oryza sativa (Rice).